The following is a 37-amino-acid chain: Omega-sparatoxin-Hv1a (37 aa).

3 cysteine pairs are disulfide-bonded: cysteine 4–cysteine 18, cysteine 11–cysteine 23, and cysteine 17–cysteine 33.

Expressed by the venom gland.

It is found in the secreted. Functionally, blocks calcium channels (Cav). This Heteropoda venatoria (Brown huntsman spider) protein is Omega-sparatoxin-Hv1a.